The chain runs to 374 residues: Bifunctional enzyme IspD/IspF (374 aa).

Residues 1-213 (MLDVTLIVLC…PCLKAPSNNF (213 aa)) form a 2-C-methyl-D-erythritol 4-phosphate cytidylyltransferase region. The segment at 214-374 (FTGTGFDIHA…TLKYYNWKKR (161 aa)) is 2-C-methyl-D-erythritol 2,4-cyclodiphosphate synthase. D220 and H222 together coordinate a divalent metal cation. 4-CDP-2-C-methyl-D-erythritol 2-phosphate contacts are provided by residues 220-222 (DIH) and 246-247 (HS). Position 254 (H254) interacts with a divalent metal cation. 4-CDP-2-C-methyl-D-erythritol 2-phosphate contacts are provided by residues 268-270 (DIG), 273-277 (FPDTD), 344-347 (TTAE), F351, and R354.

The protein in the N-terminal section; belongs to the IspD/TarI cytidylyltransferase family. IspD subfamily. In the C-terminal section; belongs to the IspF family. Requires a divalent metal cation as cofactor.

The catalysed reaction is 2-C-methyl-D-erythritol 4-phosphate + CTP + H(+) = 4-CDP-2-C-methyl-D-erythritol + diphosphate. The enzyme catalyses 4-CDP-2-C-methyl-D-erythritol 2-phosphate = 2-C-methyl-D-erythritol 2,4-cyclic diphosphate + CMP. Its pathway is isoprenoid biosynthesis; isopentenyl diphosphate biosynthesis via DXP pathway; isopentenyl diphosphate from 1-deoxy-D-xylulose 5-phosphate: step 2/6. It participates in isoprenoid biosynthesis; isopentenyl diphosphate biosynthesis via DXP pathway; isopentenyl diphosphate from 1-deoxy-D-xylulose 5-phosphate: step 4/6. Its function is as follows. Bifunctional enzyme that catalyzes the formation of 4-diphosphocytidyl-2-C-methyl-D-erythritol from CTP and 2-C-methyl-D-erythritol 4-phosphate (MEP) (IspD), and catalyzes the conversion of 4-diphosphocytidyl-2-C-methyl-D-erythritol 2-phosphate (CDP-ME2P) to 2-C-methyl-D-erythritol 2,4-cyclodiphosphate (ME-CPP) with a corresponding release of cytidine 5-monophosphate (CMP) (IspF). The sequence is that of Bifunctional enzyme IspD/IspF from Aliarcobacter butzleri (strain RM4018) (Arcobacter butzleri).